Consider the following 764-residue polypeptide: Myotubularin-related protein 10-B (764 aa).

Positions 208–649 constitute a Myotubularin phosphatase domain; it reads FESYSDWDRE…THIQIWKLCY (442 aa).

The protein belongs to the protein-tyrosine phosphatase family. Non-receptor class myotubularin subfamily.

The polypeptide is Myotubularin-related protein 10-B (mtmr10-b) (Xenopus laevis (African clawed frog)).